Here is a 437-residue protein sequence, read N- to C-terminus: Carboxypeptidase A6 (437 aa).

An N-terminal signal peptide occupies residues 1-30 (MKCLGKRRGQAAAFLPLCWLFLKILQPGHS). A propeptide spans 31–129 (HLYNNRYAGD…SSLHTQRNRR (99 aa)) (activation peptide). Residues N89 and N153 are each glycosylated (N-linked (GlcNAc...) asparagine). Residues 138–432 (VYHSLEEIQN…LAVKNITMHL (295 aa)) enclose the Peptidase M14 domain. Residues H196 and E199 each coordinate Zn(2+). Residues 196 to 199 (HARE), R254, and 271 to 272 (NR) each bind substrate. The cysteines at positions 265 and 288 are disulfide-linked. H324 provides a ligand contact to Zn(2+). Substrate contacts are provided by residues 325–326 (AY) and Y376. E398 acts as the Proton donor/acceptor in catalysis. N427 carries an N-linked (GlcNAc...) asparagine glycan.

The protein belongs to the peptidase M14 family. The cofactor is Zn(2+). In terms of tissue distribution, expressed in the hippocampus, nucleus raphe, and cortex.

It localises to the secreted. The protein resides in the extracellular space. It is found in the extracellular matrix. Functionally, may be involved in the proteolytic inactivation of enkephalins and neurotensin in some brain areas. May convert inactive angiotensin I into the biologically active angiotensin II. Releases a C-terminal amino acid, with preference for large hydrophobic C-terminal amino acids and shows only very weak activity toward small amino acids and histidine. This chain is Carboxypeptidase A6 (CPA6), found in Homo sapiens (Human).